A 282-amino-acid polypeptide reads, in one-letter code: Bis(5'-nucleosyl)-tetraphosphatase, symmetrical (282 aa).

Belongs to the Ap4A hydrolase family.

It carries out the reaction P(1),P(4)-bis(5'-adenosyl) tetraphosphate + H2O = 2 ADP + 2 H(+). Hydrolyzes diadenosine 5',5'''-P1,P4-tetraphosphate to yield ADP. This is Bis(5'-nucleosyl)-tetraphosphatase, symmetrical from Escherichia coli O7:K1 (strain IAI39 / ExPEC).